The primary structure comprises 276 residues: Undecaprenyl-diphosphatase (276 aa).

Transmembrane regions (helical) follow at residues 1-21 (MHWL…FLPV), 41-61 (LLLD…VFFA), 97-117 (ALLI…FHKI), 121-141 (LFAS…LLWA), 155-175 (VTWG…LPGI), 200-220 (FLLS…DASA), 231-251 (LGGI…LAIV), and 256-276 (LWWF…ANFV).

This sequence belongs to the UppP family.

Its subcellular location is the cell inner membrane. It carries out the reaction di-trans,octa-cis-undecaprenyl diphosphate + H2O = di-trans,octa-cis-undecaprenyl phosphate + phosphate + H(+). Functionally, catalyzes the dephosphorylation of undecaprenyl diphosphate (UPP). Confers resistance to bacitracin. The sequence is that of Undecaprenyl-diphosphatase from Desulfatibacillum aliphaticivorans.